A 220-amino-acid polypeptide reads, in one-letter code: Ribose-5-phosphate isomerase A (220 aa).

Residues 25 to 28 (TGST), 80 to 83 (DGAD), and 93 to 96 (KGGG) each bind substrate. Glu-102 functions as the Proton acceptor in the catalytic mechanism. Lys-120 provides a ligand contact to substrate.

It belongs to the ribose 5-phosphate isomerase family. As to quaternary structure, homodimer.

It carries out the reaction aldehydo-D-ribose 5-phosphate = D-ribulose 5-phosphate. Its pathway is carbohydrate degradation; pentose phosphate pathway; D-ribose 5-phosphate from D-ribulose 5-phosphate (non-oxidative stage): step 1/1. Its function is as follows. Catalyzes the reversible conversion of ribose-5-phosphate to ribulose 5-phosphate. The sequence is that of Ribose-5-phosphate isomerase A from Bacillus anthracis.